Consider the following 192-residue polypeptide: Lipid A acyltransferase PagP (192 aa).

A signal peptide spans 1–26 (MTVVNKSFLTFLVFFCQILFPLNASA). Residues His64, Asp107, and Ser108 contribute to the active site.

This sequence belongs to the lipid A palmitoyltransferase family. In terms of assembly, homodimer.

The protein localises to the cell outer membrane. The enzyme catalyses a lipid A + a 1,2-diacyl-sn-glycero-3-phosphocholine = a hepta-acyl lipid A + a 2-acyl-sn-glycero-3-phosphocholine. It carries out the reaction a lipid IVA + a 1,2-diacyl-sn-glycero-3-phosphocholine = a lipid IVB + a 2-acyl-sn-glycero-3-phosphocholine. The catalysed reaction is a lipid IIA + a 1,2-diacyl-sn-glycero-3-phosphocholine = a lipid IIB + a 2-acyl-sn-glycero-3-phosphocholine. Transfers a fatty acid residue from the sn-1 position of a phospholipid to the N-linked hydroxyfatty acid chain on the proximal unit of lipid A or its precursors. This is Lipid A acyltransferase PagP from Cronobacter turicensis (strain DSM 18703 / CCUG 55852 / LMG 23827 / z3032).